Reading from the N-terminus, the 145-residue chain is Fatty acid-binding protein homolog 4 (145 aa).

The protein belongs to the calycin superfamily. Fatty-acid binding protein (FABP) family.

This Caenorhabditis elegans protein is Fatty acid-binding protein homolog 4 (lbp-4).